A 431-amino-acid chain; its full sequence is Glucose-6-phosphate isomerase (431 aa).

The Proton donor role is filled by glutamate 284. Residues histidine 305 and lysine 420 contribute to the active site.

Belongs to the GPI family.

It localises to the cytoplasm. It catalyses the reaction alpha-D-glucose 6-phosphate = beta-D-fructose 6-phosphate. It functions in the pathway carbohydrate biosynthesis; gluconeogenesis. It participates in carbohydrate degradation; glycolysis; D-glyceraldehyde 3-phosphate and glycerone phosphate from D-glucose: step 2/4. Catalyzes the reversible isomerization of glucose-6-phosphate to fructose-6-phosphate. This Mycoplasma genitalium (strain ATCC 33530 / DSM 19775 / NCTC 10195 / G37) (Mycoplasmoides genitalium) protein is Glucose-6-phosphate isomerase.